The sequence spans 436 residues: 3-ketoacyl-CoA thiolase (436 aa).

Cys-99 acts as the Acyl-thioester intermediate in catalysis. Active-site proton acceptor residues include His-392 and Cys-422.

Belongs to the thiolase-like superfamily. Thiolase family. As to quaternary structure, heterotetramer of two alpha chains (FadJ) and two beta chains (FadI).

It is found in the cytoplasm. The enzyme catalyses an acyl-CoA + acetyl-CoA = a 3-oxoacyl-CoA + CoA. It participates in lipid metabolism; fatty acid beta-oxidation. In terms of biological role, catalyzes the final step of fatty acid oxidation in which acetyl-CoA is released and the CoA ester of a fatty acid two carbons shorter is formed. This Shigella boydii serotype 18 (strain CDC 3083-94 / BS512) protein is 3-ketoacyl-CoA thiolase.